The chain runs to 122 residues: UPF0102 protein CTC_01256 (122 aa).

It belongs to the UPF0102 family.

In Clostridium tetani (strain Massachusetts / E88), this protein is UPF0102 protein CTC_01256.